The chain runs to 48 residues: Ribulose bisphosphate carboxylase large chain (48 aa).

It belongs to the RuBisCO large chain family. Type I subfamily. As to quaternary structure, heterohexadecamer of 8 large chains and 8 small chains.

It localises to the plastid. The protein localises to the chloroplast. It carries out the reaction 2 (2R)-3-phosphoglycerate + 2 H(+) = D-ribulose 1,5-bisphosphate + CO2 + H2O. It catalyses the reaction D-ribulose 1,5-bisphosphate + O2 = 2-phosphoglycolate + (2R)-3-phosphoglycerate + 2 H(+). Its function is as follows. RuBisCO catalyzes two reactions: the carboxylation of D-ribulose 1,5-bisphosphate, the primary event in carbon dioxide fixation, as well as the oxidative fragmentation of the pentose substrate in the photorespiration process. Both reactions occur simultaneously and in competition at the same active site. The sequence is that of Ribulose bisphosphate carboxylase large chain (rbcL) from Pinus pinaster (Maritime pine).